The chain runs to 582 residues: 5-aminolevulinate synthase, erythroid-specific, mitochondrial (582 aa).

Residue arginine 158 participates in succinyl-CoA binding. Residues cysteine 253 and phenylalanine 254 each contribute to the pyridoxal 5'-phosphate site. Serine 275 and arginine 294 together coordinate succinyl-CoA. The pyridoxal 5'-phosphate site is built by serine 327, histidine 355, and threonine 383. Lysine 386 is a catalytic residue. Lysine 386 carries the N6-(pyridoxal phosphate)lysine modification. Pyridoxal 5'-phosphate-binding residues include threonine 415 and threonine 416. Succinyl-CoA is bound at residue threonine 503.

This sequence belongs to the class-II pyridoxal-phosphate-dependent aminotransferase family. Homodimer. Requires pyridoxal 5'-phosphate as cofactor.

The protein localises to the mitochondrion inner membrane. The enzyme catalyses succinyl-CoA + glycine + H(+) = 5-aminolevulinate + CO2 + CoA. It participates in porphyrin-containing compound metabolism; protoporphyrin-IX biosynthesis; 5-aminolevulinate from glycine: step 1/1. Functionally, catalyzes the pyridoxal 5'-phosphate (PLP)-dependent condensation of succinyl-CoA and glycine to form aminolevulinic acid (ALA), with CoA and CO2 as by-products. Contributes significantly to heme formation during erythropoiesis. The chain is 5-aminolevulinate synthase, erythroid-specific, mitochondrial (alas2) from Opsanus tau (Oyster toadfish).